The primary structure comprises 211 residues: MRVRNISNAKELLKEYKEYVAAPQLFKEQWHTYFENQNPIHIEIGMGKGQFIRTLAKLNPNINYIGLEKVEELVLKSVRSIEAEEICNISLINWNAVKLEEILGEGEIERIYLNFSDPWPKARHDKRRLTHHGFLDIYQKLLKDHGEIHLKTDSKALFEFSLEQFTQKNFTLVEVIEDLHGSTDKEIAKTEYEEKFIAEGKPIYKCIARIE.

Positions 43, 68, 95, and 117 each coordinate S-adenosyl-L-methionine. The active site involves Asp117. Substrate-binding positions include Lys121, Asp153, and 190–193; that span reads TEYE.

This sequence belongs to the class I-like SAM-binding methyltransferase superfamily. TrmB family.

It catalyses the reaction guanosine(46) in tRNA + S-adenosyl-L-methionine = N(7)-methylguanosine(46) in tRNA + S-adenosyl-L-homocysteine. It functions in the pathway tRNA modification; N(7)-methylguanine-tRNA biosynthesis. Functionally, catalyzes the formation of N(7)-methylguanine at position 46 (m7G46) in tRNA. This is tRNA (guanine-N(7)-)-methyltransferase from Alkaliphilus oremlandii (strain OhILAs) (Clostridium oremlandii (strain OhILAs)).